The following is a 355-amino-acid chain: Tryptophan--tRNA ligase (355 aa).

ATP-binding positions include 13 to 15 (QPT) and 21 to 22 (GN). Residues 14-22 (PTGNLHLGN) carry the 'HIGH' region motif. Asp137 is a binding site for L-tryptophan. ATP contacts are provided by residues 149–151 (GED), Ile208, and 217–221 (KMSKS). A 'KMSKS' region motif is present at residues 217–221 (KMSKS).

Belongs to the class-I aminoacyl-tRNA synthetase family. As to quaternary structure, homodimer.

It is found in the cytoplasm. The enzyme catalyses tRNA(Trp) + L-tryptophan + ATP = L-tryptophyl-tRNA(Trp) + AMP + diphosphate + H(+). Its function is as follows. Catalyzes the attachment of tryptophan to tRNA(Trp). The sequence is that of Tryptophan--tRNA ligase from Mesorhizobium japonicum (strain LMG 29417 / CECT 9101 / MAFF 303099) (Mesorhizobium loti (strain MAFF 303099)).